Here is a 963-residue protein sequence, read N- to C-terminus: Phosphofurin acidic cluster sorting protein 1 (963 aa).

The span at 1–22 (MAERGGAGGGPGGAGGGSGQRG) shows a compositional bias: gly residues. Disordered stretches follow at residues 1-72 (MAER…SSST) and 78-97 (VAVA…RTPA). Ala-2 is subject to N-acetylalanine. Residue Ser-28 is modified to Phosphoserine. Thr-46 bears the Phosphothreonine mark. Low complexity predominate over residues 53–72 (ATSSSSSTSAAAASSSSSST). An involved in binding to AP-1 region spans residues 168–175 (ETELQLTF). Tyr-251 bears the Phosphotyrosine mark. Residues 262–273 (GIKSKLSDRSPD) are compositionally biased toward basic and acidic residues. 2 disordered regions span residues 262-299 (GIKS…LHGQ) and 377-428 (NPSD…GKDT). Acidic residues predominate over residues 276 to 293 (NYSEEEEESFSSEQEGSD). Residues 353–377 (HVSREQIREVEEDLDELYDSLEMYN) adopt a coiled-coil conformation. Phosphoserine is present on residues Ser-379 and Ser-381. Residues 406-428 (MSQSSSQTEIGSLNSKGSLGKDT) are compositionally biased toward polar residues. Phosphoserine is present on residues Ser-430 and Ser-495. Disordered regions lie at residues 476 to 542 (PEKV…HSTQ) and 760 to 804 (SPST…SMSS). Polar residues predominate over residues 483 to 496 (MKSSKTDLQGSASP). At Thr-504 the chain carries Phosphothreonine. Ser-519, Ser-528, Ser-529, Ser-531, and Ser-534 each carry phosphoserine. A compositionally biased stretch (low complexity) spans 770–804 (SPVVSLTVPSTSPPSSSGLSRDATATPPSSPSMSS).

This sequence belongs to the PACS family. In terms of assembly, associates with AP-1 and AP-3 but not with AP-2 complexes. Interacts with FURIN. Forms a ternary complex with FURIN and AP-1. Interacts with NPHP1; the interaction is dependent of NPHP1 phosphorylation by CK2. Interacts with PKD2 (via acidic region). Interacts with SORL1. Interacts with WDR37. (Microbial infection) Interacts with HIV-1 Nef. As to quaternary structure, (Microbial infection) Interacts with Epstein-barr virus protein BBLF1.

It localises to the golgi apparatus. It is found in the trans-Golgi network. Functionally, coat protein that is involved in the localization of trans-Golgi network (TGN) membrane proteins that contain acidic cluster sorting motifs. Controls the endosome-to-Golgi trafficking of furin and mannose-6-phosphate receptor by connecting the acidic-cluster-containing cytoplasmic domain of these molecules with the adapter-protein complex-1 (AP-1) of endosomal clathrin-coated membrane pits. Involved in HIV-1 nef-mediated removal of MHC-I from the cell surface to the TGN. Required for normal ER Ca2+ handling in lymphocytes. Together with WDR37, it plays an essential role in lymphocyte development, quiescence and survival. Required for stabilizing peripheral lymphocyte populations. This is Phosphofurin acidic cluster sorting protein 1 (PACS1) from Homo sapiens (Human).